The primary structure comprises 366 residues: Protein-methionine-sulfoxide reductase catalytic subunit MsrP (366 aa).

Residues 1-22 (MHNTFTHTKNNTHTKNNTQAKN) show a composition bias toward low complexity. Positions 1 to 40 (MHNTFTHTKNNTHTKNNTQAKNSGSQTKSNAVSLNKPRKL) are disordered. Positions 1–76 (MHNTFTHTKN…TLALPASAQA (76 aa)) form a signal peptide, tat-type signal. Positions 23-33 (SGSQTKSNAVS) are enriched in polar residues. Residues Asn-120, 123-124 (YE), Cys-178, Thr-213, Asn-265, Arg-270, and 281-283 (SIK) each bind Mo-molybdopterin.

The protein belongs to the MsrP family. As to quaternary structure, heterodimer of a catalytic subunit (MsrP) and a heme-binding subunit (MsrQ). Requires Mo-molybdopterin as cofactor. Predicted to be exported by the Tat system. The position of the signal peptide cleavage has not been experimentally proven.

Its subcellular location is the periplasm. The enzyme catalyses L-methionyl-[protein] + a quinone + H2O = L-methionyl-(S)-S-oxide-[protein] + a quinol. It catalyses the reaction L-methionyl-[protein] + a quinone + H2O = L-methionyl-(R)-S-oxide-[protein] + a quinol. Its function is as follows. Part of the MsrPQ system that repairs oxidized periplasmic proteins containing methionine sulfoxide residues (Met-O), using respiratory chain electrons. Thus protects these proteins from oxidative-stress damage caused by reactive species of oxygen and chlorine generated by the host defense mechanisms. MsrPQ is essential for the maintenance of envelope integrity under bleach stress, rescuing a wide series of structurally unrelated periplasmic proteins from methionine oxidation. The catalytic subunit MsrP is non-stereospecific, being able to reduce both (R-) and (S-) diastereoisomers of methionine sulfoxide. This chain is Protein-methionine-sulfoxide reductase catalytic subunit MsrP, found in Yersinia pestis.